The sequence spans 342 residues: S-adenosylmethionine:tRNA ribosyltransferase-isomerase (342 aa).

It belongs to the QueA family. Monomer.

It localises to the cytoplasm. It carries out the reaction 7-aminomethyl-7-carbaguanosine(34) in tRNA + S-adenosyl-L-methionine = epoxyqueuosine(34) in tRNA + adenine + L-methionine + 2 H(+). Its pathway is tRNA modification; tRNA-queuosine biosynthesis. In terms of biological role, transfers and isomerizes the ribose moiety from AdoMet to the 7-aminomethyl group of 7-deazaguanine (preQ1-tRNA) to give epoxyqueuosine (oQ-tRNA). In Brevibacillus brevis (strain 47 / JCM 6285 / NBRC 100599), this protein is S-adenosylmethionine:tRNA ribosyltransferase-isomerase.